Consider the following 2313-residue polypeptide: Protein Ycf2 (2313 aa).

Position 1606-1613 (1606-1613 (GSMETGRS)) interacts with ATP.

It belongs to the Ycf2 family.

The protein resides in the plastid. Its subcellular location is the chloroplast stroma. Functionally, probable ATPase of unknown function. Its presence in a non-photosynthetic plant (Epifagus virginiana) and experiments in tobacco indicate that it has an essential function which is probably not related to photosynthesis. The chain is Protein Ycf2 from Psilotum nudum (Whisk fern).